Here is a 152-residue protein sequence, read N- to C-terminus: Protein-export protein SecB (152 aa).

Belongs to the SecB family. Homotetramer, a dimer of dimers. One homotetramer interacts with 1 SecA dimer.

It is found in the cytoplasm. Its function is as follows. One of the proteins required for the normal export of preproteins out of the cell cytoplasm. It is a molecular chaperone that binds to a subset of precursor proteins, maintaining them in a translocation-competent state. It also specifically binds to its receptor SecA. The protein is Protein-export protein SecB of Dechloromonas aromatica (strain RCB).